Here is a 572-residue protein sequence, read N- to C-terminus: 2-succinyl-5-enolpyruvyl-6-hydroxy-3-cyclohexene-1-carboxylate synthase (572 aa).

This sequence belongs to the TPP enzyme family. MenD subfamily. As to quaternary structure, homodimer. Mg(2+) serves as cofactor. Requires Mn(2+) as cofactor. Thiamine diphosphate is required as a cofactor.

The enzyme catalyses isochorismate + 2-oxoglutarate + H(+) = 5-enolpyruvoyl-6-hydroxy-2-succinyl-cyclohex-3-ene-1-carboxylate + CO2. The protein operates within quinol/quinone metabolism; 1,4-dihydroxy-2-naphthoate biosynthesis; 1,4-dihydroxy-2-naphthoate from chorismate: step 2/7. Its pathway is quinol/quinone metabolism; menaquinone biosynthesis. Functionally, catalyzes the thiamine diphosphate-dependent decarboxylation of 2-oxoglutarate and the subsequent addition of the resulting succinic semialdehyde-thiamine pyrophosphate anion to isochorismate to yield 2-succinyl-5-enolpyruvyl-6-hydroxy-3-cyclohexene-1-carboxylate (SEPHCHC). The polypeptide is 2-succinyl-5-enolpyruvyl-6-hydroxy-3-cyclohexene-1-carboxylate synthase (Aeromonas salmonicida (strain A449)).